A 46-amino-acid polypeptide reads, in one-letter code: Viscotoxin-1-PS (46 aa).

Disulfide bonds link Cys-3/Cys-40, Cys-4/Cys-32, and Cys-16/Cys-26.

It belongs to the plant thionin (TC 1.C.44) family.

The protein localises to the secreted. Functionally, thionins are small plant proteins which are toxic to animal cells. They seem to exert their toxic effect at the level of the cell membrane. Their precise function is not known. The protein is Viscotoxin-1-PS (THI2.4) of Viscum album (European mistletoe).